The chain runs to 513 residues: Glycogen synthase (513 aa).

K47 lines the ADP-alpha-D-glucose pocket.

Belongs to the glycosyltransferase 1 family. Bacterial/plant glycogen synthase subfamily.

The enzyme catalyses [(1-&gt;4)-alpha-D-glucosyl](n) + ADP-alpha-D-glucose = [(1-&gt;4)-alpha-D-glucosyl](n+1) + ADP + H(+). It functions in the pathway glycan biosynthesis; glycogen biosynthesis. Synthesizes alpha-1,4-glucan chains using ADP-glucose. The protein is Glycogen synthase of Pseudomonas paraeruginosa (strain DSM 24068 / PA7) (Pseudomonas aeruginosa (strain PA7)).